The sequence spans 822 residues: Probable phosphoketolase (822 aa).

Belongs to the XFP family. It depends on thiamine diphosphate as a cofactor.

The polypeptide is Probable phosphoketolase (Lactococcus lactis subsp. lactis (strain IL1403) (Streptococcus lactis)).